The sequence spans 113 residues: Putative pterin-4-alpha-carbinolamine dehydratase (113 aa).

This sequence belongs to the pterin-4-alpha-carbinolamine dehydratase family.

The enzyme catalyses (4aS,6R)-4a-hydroxy-L-erythro-5,6,7,8-tetrahydrobiopterin = (6R)-L-erythro-6,7-dihydrobiopterin + H2O. The polypeptide is Putative pterin-4-alpha-carbinolamine dehydratase (Rickettsia bellii (strain OSU 85-389)).